Here is a 597-residue protein sequence, read N- to C-terminus: Elongation factor 4 (597 aa).

Residues 2–184 (DHIRNFSIIA…SLIAKVPPPK (183 aa)) enclose the tr-type G domain. Residues 14-19 (DHGKST) and 131-134 (NKID) each bind GTP.

Belongs to the TRAFAC class translation factor GTPase superfamily. Classic translation factor GTPase family. LepA subfamily.

The protein localises to the cell inner membrane. The enzyme catalyses GTP + H2O = GDP + phosphate + H(+). In terms of biological role, required for accurate and efficient protein synthesis under certain stress conditions. May act as a fidelity factor of the translation reaction, by catalyzing a one-codon backward translocation of tRNAs on improperly translocated ribosomes. Back-translocation proceeds from a post-translocation (POST) complex to a pre-translocation (PRE) complex, thus giving elongation factor G a second chance to translocate the tRNAs correctly. Binds to ribosomes in a GTP-dependent manner. The chain is Elongation factor 4 from Burkholderia pseudomallei (strain 1710b).